Consider the following 438-residue polypeptide: Thymidine phosphorylase (438 aa).

This sequence belongs to the thymidine/pyrimidine-nucleoside phosphorylase family. As to quaternary structure, homodimer.

The catalysed reaction is thymidine + phosphate = 2-deoxy-alpha-D-ribose 1-phosphate + thymine. The protein operates within pyrimidine metabolism; dTMP biosynthesis via salvage pathway; dTMP from thymine: step 1/2. Its function is as follows. The enzymes which catalyze the reversible phosphorolysis of pyrimidine nucleosides are involved in the degradation of these compounds and in their utilization as carbon and energy sources, or in the rescue of pyrimidine bases for nucleotide synthesis. This is Thymidine phosphorylase from Sinorhizobium medicae (strain WSM419) (Ensifer medicae).